The following is a 123-amino-acid chain: Large ribosomal subunit protein uL14 (123 aa).

The protein belongs to the universal ribosomal protein uL14 family. As to quaternary structure, part of the 50S ribosomal subunit. Forms a cluster with proteins L3 and L19. In the 70S ribosome, L14 and L19 interact and together make contacts with the 16S rRNA in bridges B5 and B8.

Functionally, binds to 23S rRNA. Forms part of two intersubunit bridges in the 70S ribosome. The chain is Large ribosomal subunit protein uL14 from Zymomonas mobilis subsp. mobilis (strain ATCC 31821 / ZM4 / CP4).